The following is a 296-amino-acid chain: Sulfotransferase 1E1 (296 aa).

49-54 (KSGTTW) contributes to the 3'-phosphoadenylyl sulfate binding site. 107-109 (KTH) provides a ligand contact to substrate. The Proton acceptor role is filled by H109. 3'-phosphoadenylyl sulfate-binding positions include R131, S139, Y194, 228-233 (TSFQEM), and 258-260 (RKG).

This sequence belongs to the sulfotransferase 1 family. Homodimer. In terms of processing, the N-terminus is blocked. In terms of tissue distribution, adrenal gland and much less in liver. Detectable only during pregnancy in uterine.

It localises to the cytoplasm. It is found in the cytosol. It carries out the reaction estrone + 3'-phosphoadenylyl sulfate = estrone 3-sulfate + adenosine 3',5'-bisphosphate + H(+). The enzyme catalyses (24S)-hydroxycholesterol + 3'-phosphoadenylyl sulfate = (24S)-hydroxycholesterol 3-sulfate + adenosine 3',5'-bisphosphate + H(+). It catalyses the reaction 17beta-estradiol + 3'-phosphoadenylyl sulfate = 17beta-estradiol 3-sulfate + adenosine 3',5'-bisphosphate + H(+). The catalysed reaction is 3beta-hydroxyandrost-5-en-17-one + 3'-phosphoadenylyl sulfate = dehydroepiandrosterone 3-sulfate + adenosine 3',5'-bisphosphate + H(+). It carries out the reaction 4-ethylphenol + 3'-phosphoadenylyl sulfate = 4-ethylphenyl sulfate + adenosine 3',5'-bisphosphate + H(+). Its activity is regulated as follows. Inhibited by estradiol. Sulfotransferase that utilizes 3'-phospho-5'-adenylyl sulfate (PAPS) as sulfonate donor to catalyze the sulfate conjugation of estradiol and estrone. Is a key enzyme in estrogen homeostasis, the sulfation of estrogens leads to their inactivation. Also sulfates dehydroepiandrosterone (DHEA), pregnenolone, (24S)-hydroxycholesteroland xenobiotic compounds like ethinylestradiol, equalenin, diethyl stilbesterol and 1-naphthol at significantly lower efficiency. Does not sulfonate cortisol, testosterone and dopamine. May play a role in gut microbiota-host metabolic interaction. O-sulfonates 4-ethylphenol (4-EP), a dietary tyrosine-derived metabolite produced by gut bacteria. The product 4-EPS crosses the blood-brain barrier and may negatively regulate oligodendrocyte maturation and myelination, affecting the functional connectivity of different brain regions associated with the limbic system. The protein is Sulfotransferase 1E1 (SULT1E1) of Cavia porcellus (Guinea pig).